Consider the following 252-residue polypeptide: Uridylate kinase (252 aa).

20-23 (KLSG) provides a ligand contact to ATP. The segment at 28-33 (GGGGLG) is involved in allosteric activation by GTP. Gly62 contributes to the UMP binding site. ATP-binding residues include Gly63 and Arg67. UMP contacts are provided by residues Asp82 and 143-150 (MGMPYFST). ATP contacts are provided by Asn171, Tyr177, and Asp180.

Belongs to the UMP kinase family. As to quaternary structure, homohexamer.

It is found in the cytoplasm. It carries out the reaction UMP + ATP = UDP + ADP. The protein operates within pyrimidine metabolism; CTP biosynthesis via de novo pathway; UDP from UMP (UMPK route): step 1/1. Allosterically activated by GTP. Inhibited by UTP. In terms of biological role, catalyzes the reversible phosphorylation of UMP to UDP. In Streptomyces avermitilis (strain ATCC 31267 / DSM 46492 / JCM 5070 / NBRC 14893 / NCIMB 12804 / NRRL 8165 / MA-4680), this protein is Uridylate kinase.